The sequence spans 491 residues: Ketol-acid reductoisomerase (NADP(+)) (491 aa).

A KARI N-terminal Rossmann domain is found at 17-208; it reads LGKCRFMSRD…GGHRAGVLES (192 aa). NADP(+)-binding positions include 45–48, Arg68, Arg76, Ser78, and 108–110; these read CGAQ and DKQ. His132 is a catalytic residue. Gly158 contacts NADP(+). 2 KARI C-terminal knotted domains span residues 209-344 and 345-484; these read SFVA…NYPE and YEGK…MTDM. Residues Asp217, Glu221, Glu389, and Glu393 each coordinate Mg(2+). Ser414 lines the substrate pocket.

The protein belongs to the ketol-acid reductoisomerase family. Mg(2+) serves as cofactor.

The enzyme catalyses (2R)-2,3-dihydroxy-3-methylbutanoate + NADP(+) = (2S)-2-acetolactate + NADPH + H(+). It carries out the reaction (2R,3R)-2,3-dihydroxy-3-methylpentanoate + NADP(+) = (S)-2-ethyl-2-hydroxy-3-oxobutanoate + NADPH + H(+). It functions in the pathway amino-acid biosynthesis; L-isoleucine biosynthesis; L-isoleucine from 2-oxobutanoate: step 2/4. It participates in amino-acid biosynthesis; L-valine biosynthesis; L-valine from pyruvate: step 2/4. Functionally, involved in the biosynthesis of branched-chain amino acids (BCAA). Catalyzes an alkyl-migration followed by a ketol-acid reduction of (S)-2-acetolactate (S2AL) to yield (R)-2,3-dihydroxy-isovalerate. In the isomerase reaction, S2AL is rearranged via a Mg-dependent methyl migration to produce 3-hydroxy-3-methyl-2-ketobutyrate (HMKB). In the reductase reaction, this 2-ketoacid undergoes a metal-dependent reduction by NADPH to yield (R)-2,3-dihydroxy-isovalerate. This Proteus mirabilis (strain HI4320) protein is Ketol-acid reductoisomerase (NADP(+)).